The primary structure comprises 677 residues: MSAAKNEMYYSLLEWFKTLNLNAPHADAESLADGVAVAQALNQFAPESFTDSWLAKIKASAVGINWRLRMSNLKKVTQSLYDYYSEVLNYTLSDFVKPDVQRIAEKCDLVELERLLQLVLGCAVNCAKKQSYITEIMCLEEELQANIMRALQELESSRNAAEGGIVTSLSRSSISGMLDGKVLQEERDAMAQKCFETEKKMLLLIDEKTNLQQELQRVQKEFARLEHSSTVIGDDGVSLGPVQTGSVRYNELRRQLDLLKEELLQSEGAREDLKLKAQQQETDLLHMQMRIDELLKSTAEVTTLKDEVDVLRESNDKLKICEGQLDTYKKKLEDYNDLKKQVKILEERSADYVQQNAQFEEDAKRYANTKGQIELFKKEIQDLHTKLDSESSKNVKLEFDNKNLEGKNLALQRAKDSLLKERDNLRETVDELKCGHLSSNSGLTGTAVSRELQPPATVEKMQRLEAENKALREGQGGQTALAQLLDDANKRCENLREQLKSANERILSLSHASQSDDPILKESEFGKQIKQLMELNEQKTLQLEESVTQSSSLQCKVTQLETNLTAREQEVMAYDAKYRKCLEKAKEVIKSFDPRIASAIDASALEKYFDVVEEEPKPKMSVMEEQLMTSAFYRLGVNAQRDAVDSKLAILMGSGQTFLARQRQSAPRKSLSAMKSK.

Residues 6–123 (NEMYYSLLEW…RLLQLVLGCA (118 aa)) enclose the Calponin-homology (CH) domain. Coiled coils occupy residues 135–436 (EIMC…KCGH) and 478–588 (QTAL…AKEV).

Belongs to the hook family. Homodimer. Interacts with microtubules via its N-terminus.

It is found in the cytoplasm. It localises to the cytoskeleton. The protein resides in the endosome. The protein localises to the synapse. In terms of biological role, involved in endocytic trafficking by stabilizing organelles of the endocytic pathway. Probably acts as a cytoskeletal linker protein required to tether endosome vesicles to the cytoskeleton. Involved in modulation of endocytosis at stages required for down-regulation of membrane proteins that control synapse size. Not involved in synaptic vesicle recycling. Required in R7 cells for boss endocytosis into multivesicular bodies (MVBs). Has a role in regulating adult longevity. This is Protein hook from Drosophila pseudoobscura pseudoobscura (Fruit fly).